Consider the following 86-residue polypeptide: UPF0457 protein SSP0714 (86 aa).

The protein belongs to the UPF0457 family.

The polypeptide is UPF0457 protein SSP0714 (Staphylococcus saprophyticus subsp. saprophyticus (strain ATCC 15305 / DSM 20229 / NCIMB 8711 / NCTC 7292 / S-41)).